A 247-amino-acid chain; its full sequence is Dynein axonemal assembly factor 19 (247 aa).

A coiled-coil region spans residues 12 to 32 (LEKELHSALQADRKYQRENDA).

The protein belongs to the DNAAF19/PR46b family. As to quaternary structure, homodimer. Expressed in all cells bearing motile cilia.

It localises to the cytoplasm. The protein localises to the cell projection. Its subcellular location is the cilium. It is found in the flagellum. Functionally, dynein-attachment factor required for cilia motility. This chain is Dynein axonemal assembly factor 19 (dnaaf19), found in Danio rerio (Zebrafish).